The following is a 677-amino-acid chain: Methionine--tRNA ligase (677 aa).

The 'HIGH' region signature appears at 15-25 (PYANGSIHLGH). Residues cysteine 146, cysteine 149, cysteine 159, and cysteine 162 each coordinate Zn(2+). The short motif at 333-337 (KMSKS) is the 'KMSKS' region element. Lysine 336 contacts ATP. The 103-residue stretch at 575-677 (DFAKIDLRVA…DGAKPGQQVK (103 aa)) folds into the tRNA-binding domain.

It belongs to the class-I aminoacyl-tRNA synthetase family. MetG type 1 subfamily. As to quaternary structure, homodimer. Zn(2+) is required as a cofactor.

The protein localises to the cytoplasm. The catalysed reaction is tRNA(Met) + L-methionine + ATP = L-methionyl-tRNA(Met) + AMP + diphosphate. Its function is as follows. Is required not only for elongation of protein synthesis but also for the initiation of all mRNA translation through initiator tRNA(fMet) aminoacylation. The sequence is that of Methionine--tRNA ligase from Salmonella agona (strain SL483).